A 271-amino-acid chain; its full sequence is 3-methyl-2-oxobutanoate hydroxymethyltransferase (271 aa).

2 residues coordinate Mg(2+): D50 and D89. Residues 50-51 (DS), D89, and K118 each bind 3-methyl-2-oxobutanoate. E120 contributes to the Mg(2+) binding site. E187 (proton acceptor) is an active-site residue.

It belongs to the PanB family. As to quaternary structure, homodecamer; pentamer of dimers. It depends on Mg(2+) as a cofactor.

It is found in the cytoplasm. It carries out the reaction 3-methyl-2-oxobutanoate + (6R)-5,10-methylene-5,6,7,8-tetrahydrofolate + H2O = 2-dehydropantoate + (6S)-5,6,7,8-tetrahydrofolate. Its pathway is cofactor biosynthesis; (R)-pantothenate biosynthesis; (R)-pantoate from 3-methyl-2-oxobutanoate: step 1/2. Its function is as follows. Catalyzes the reversible reaction in which hydroxymethyl group from 5,10-methylenetetrahydrofolate is transferred onto alpha-ketoisovalerate to form ketopantoate. The polypeptide is 3-methyl-2-oxobutanoate hydroxymethyltransferase (Campylobacter concisus (strain 13826)).